Consider the following 481-residue polypeptide: MQWETVIGLEIHAQLATQSKIFSGSPTAFGAAPNTQASLVDLAMPGTLPVLNEEAVRMACLFGLAIDARIDRQNVFARKNYFYPDLPKGYQTSQMDHPIVGKGHLDITLEDGTTRRIGITRAHLEEDAGKSLHEDFQGMSGIDLNRAGTPLLEIVSEPDIRSAKEAVAYVKAIHALVRYLGICDGNMAEGSLRCDCNVSVRPKGQAEFGTRAEIKNVNSFRFIEKAINHEIQRQIELIEDGGKVVQETRLYDPNKDETRSMRGKEEANDYRYFPCPDLLPVIIEPEYLAKLREQLPELPVQKRERFESQYGLSAYDASVLSASREMADYFEKVQEICGDAKLAANWVMVELGSLLNKDGLEIEQSPVSAEQLGGMILRIKDNTISGKIAKMVFEAMANGEGSADQIIEAKGLKQVTDSGAIEKMLDEVLTANAEQVEQYRAADEAKRGKMFGFFVGQAMKASKGKANPQQVNELLKKKLEA.

It belongs to the GatB/GatE family. GatB subfamily. As to quaternary structure, heterotrimer of A, B and C subunits.

It catalyses the reaction L-glutamyl-tRNA(Gln) + L-glutamine + ATP + H2O = L-glutaminyl-tRNA(Gln) + L-glutamate + ADP + phosphate + H(+). The catalysed reaction is L-aspartyl-tRNA(Asn) + L-glutamine + ATP + H2O = L-asparaginyl-tRNA(Asn) + L-glutamate + ADP + phosphate + 2 H(+). Functionally, allows the formation of correctly charged Asn-tRNA(Asn) or Gln-tRNA(Gln) through the transamidation of misacylated Asp-tRNA(Asn) or Glu-tRNA(Gln) in organisms which lack either or both of asparaginyl-tRNA or glutaminyl-tRNA synthetases. The reaction takes place in the presence of glutamine and ATP through an activated phospho-Asp-tRNA(Asn) or phospho-Glu-tRNA(Gln). The chain is Aspartyl/glutamyl-tRNA(Asn/Gln) amidotransferase subunit B from Pseudomonas paraeruginosa (strain DSM 24068 / PA7) (Pseudomonas aeruginosa (strain PA7)).